Reading from the N-terminus, the 249-residue chain is Probable transcriptional regulatory protein OTT_1378 (249 aa).

Belongs to the TACO1 family.

The protein localises to the cytoplasm. This Orientia tsutsugamushi (strain Ikeda) (Rickettsia tsutsugamushi) protein is Probable transcriptional regulatory protein OTT_1378.